The primary structure comprises 388 residues: Chorismate synthase (388 aa).

Positions 39 and 45 each coordinate NADP(+). FMN is bound by residues 130-132 (RSS), 251-252 (NA), Ala-296, 311-315 (KPIPT), and Arg-337.

This sequence belongs to the chorismate synthase family. Homotetramer. The cofactor is FMNH2.

It carries out the reaction 5-O-(1-carboxyvinyl)-3-phosphoshikimate = chorismate + phosphate. The protein operates within metabolic intermediate biosynthesis; chorismate biosynthesis; chorismate from D-erythrose 4-phosphate and phosphoenolpyruvate: step 7/7. Its function is as follows. Catalyzes the anti-1,4-elimination of the C-3 phosphate and the C-6 proR hydrogen from 5-enolpyruvylshikimate-3-phosphate (EPSP) to yield chorismate, which is the branch point compound that serves as the starting substrate for the three terminal pathways of aromatic amino acid biosynthesis. This reaction introduces a second double bond into the aromatic ring system. This Streptococcus equi subsp. zooepidemicus (strain H70) protein is Chorismate synthase.